Consider the following 277-residue polypeptide: Urease accessory protein UreD (277 aa).

The protein belongs to the UreD family. As to quaternary structure, ureD, UreF and UreG form a complex that acts as a GTP-hydrolysis-dependent molecular chaperone, activating the urease apoprotein by helping to assemble the nickel containing metallocenter of UreC. The UreE protein probably delivers the nickel.

Its subcellular location is the cytoplasm. In terms of biological role, required for maturation of urease via the functional incorporation of the urease nickel metallocenter. This chain is Urease accessory protein UreD, found in Yersinia pestis bv. Antiqua (strain Antiqua).